A 212-amino-acid chain; its full sequence is Large ribosomal subunit protein uL1 (212 aa).

It belongs to the universal ribosomal protein uL1 family. As to quaternary structure, part of the 50S ribosomal subunit.

Its function is as follows. Binds directly to 23S rRNA. Probably involved in E site tRNA release. Functionally, protein L1 is also a translational repressor protein, it controls the translation of its operon by binding to its mRNA. The sequence is that of Large ribosomal subunit protein uL1 from Haloarcula marismortui (strain ATCC 43049 / DSM 3752 / JCM 8966 / VKM B-1809) (Halobacterium marismortui).